The chain runs to 144 residues: Cytochrome c oxidase subunit 4 isoform 1, mitochondrial (144 aa).

The Mitochondrial matrix segment spans residues S1–N73. The residue at position 4 (K4) is an N6-acetyllysine; alternate. Residue K4 is modified to N6-succinyllysine; alternate. S31 and S33 each carry phosphoserine. At K35 the chain carries N6-acetyllysine; alternate. Residue K35 is modified to N6-succinyllysine; alternate. K42 bears the N6-acetyllysine mark. A helical membrane pass occupies residues E74–Y99. Topologically, residues V100–K144 are mitochondrial intermembrane.

It belongs to the cytochrome c oxidase IV family. As to quaternary structure, component of the cytochrome c oxidase (complex IV, CIV), a multisubunit enzyme composed of 14 subunits. The complex is composed of a catalytic core of 3 subunits MT-CO1, MT-CO2 and MT-CO3, encoded in the mitochondrial DNA, and 11 supernumerary subunits COX4I, COX5A, COX5B, COX6A, COX6B, COX6C, COX7A, COX7B, COX7C, COX8 and NDUFA4, which are encoded in the nuclear genome. The complex exists as a monomer or a dimer and forms supercomplexes (SCs) in the inner mitochondrial membrane with NADH-ubiquinone oxidoreductase (complex I, CI) and ubiquinol-cytochrome c oxidoreductase (cytochrome b-c1 complex, complex III, CIII), resulting in different assemblies (supercomplex SCI(1)III(2)IV(1) and megacomplex MCI(2)III(2)IV(2)). Interacts with PHB2; the interaction decreases in absence of SPHK2. Interacts with AFG1L. Interacts with ABCB7; this interaction allows the regulation of cellular iron homeostasis and cellular reactive oxygen species (ROS) levels in cardiomyocytes. Interacts with FLVCR2; this interaction occurs in the absence of heme and is disrupted upon heme binding. Interacts with IRGC.

Its subcellular location is the mitochondrion inner membrane. Its pathway is energy metabolism; oxidative phosphorylation. Its function is as follows. Component of the cytochrome c oxidase, the last enzyme in the mitochondrial electron transport chain which drives oxidative phosphorylation. The respiratory chain contains 3 multisubunit complexes succinate dehydrogenase (complex II, CII), ubiquinol-cytochrome c oxidoreductase (cytochrome b-c1 complex, complex III, CIII) and cytochrome c oxidase (complex IV, CIV), that cooperate to transfer electrons derived from NADH and succinate to molecular oxygen, creating an electrochemical gradient over the inner membrane that drives transmembrane transport and the ATP synthase. Cytochrome c oxidase is the component of the respiratory chain that catalyzes the reduction of oxygen to water. Electrons originating from reduced cytochrome c in the intermembrane space (IMS) are transferred via the dinuclear copper A center (CU(A)) of subunit 2 and heme A of subunit 1 to the active site in subunit 1, a binuclear center (BNC) formed by heme A3 and copper B (CU(B)). The BNC reduces molecular oxygen to 2 water molecules using 4 electrons from cytochrome c in the IMS and 4 protons from the mitochondrial matrix. The chain is Cytochrome c oxidase subunit 4 isoform 1, mitochondrial (COX4I1) from Aotus azarae (Azara's night monkey).